Consider the following 201-residue polypeptide: Protein GrpE (201 aa).

The interval 1 to 32 (MTDRDRQPEDTTAPTGEPVVSKPYIMPDDPEP) is disordered.

It belongs to the GrpE family. In terms of assembly, homodimer.

It is found in the cytoplasm. Participates actively in the response to hyperosmotic and heat shock by preventing the aggregation of stress-denatured proteins, in association with DnaK and GrpE. It is the nucleotide exchange factor for DnaK and may function as a thermosensor. Unfolded proteins bind initially to DnaJ; upon interaction with the DnaJ-bound protein, DnaK hydrolyzes its bound ATP, resulting in the formation of a stable complex. GrpE releases ADP from DnaK; ATP binding to DnaK triggers the release of the substrate protein, thus completing the reaction cycle. Several rounds of ATP-dependent interactions between DnaJ, DnaK and GrpE are required for fully efficient folding. This is Protein GrpE from Bradyrhizobium diazoefficiens (strain JCM 10833 / BCRC 13528 / IAM 13628 / NBRC 14792 / USDA 110).